Here is a 206-residue protein sequence, read N- to C-terminus: ATP-dependent Clp protease proteolytic subunit 1 (206 aa).

The Nucleophile role is filled by Ser106. The active site involves His131.

Belongs to the peptidase S14 family. In terms of assembly, fourteen ClpP subunits assemble into 2 heptameric rings which stack back to back to give a disk-like structure with a central cavity, resembling the structure of eukaryotic proteasomes.

It is found in the cytoplasm. The catalysed reaction is Hydrolysis of proteins to small peptides in the presence of ATP and magnesium. alpha-casein is the usual test substrate. In the absence of ATP, only oligopeptides shorter than five residues are hydrolyzed (such as succinyl-Leu-Tyr-|-NHMec, and Leu-Tyr-Leu-|-Tyr-Trp, in which cleavage of the -Tyr-|-Leu- and -Tyr-|-Trp bonds also occurs).. In terms of biological role, cleaves peptides in various proteins in a process that requires ATP hydrolysis. Has a chymotrypsin-like activity. Plays a major role in the degradation of misfolded proteins. The sequence is that of ATP-dependent Clp protease proteolytic subunit 1 from Methylococcus capsulatus (strain ATCC 33009 / NCIMB 11132 / Bath).